Reading from the N-terminus, the 425-residue chain is Serine hydroxymethyltransferase 2 (425 aa).

(6S)-5,6,7,8-tetrahydrofolate-binding positions include Leu-121 and 125 to 127 (GHL). An N6-(pyridoxal phosphate)lysine modification is found at Lys-230.

The protein belongs to the SHMT family. Homodimer. It depends on pyridoxal 5'-phosphate as a cofactor.

The protein localises to the cytoplasm. The catalysed reaction is (6R)-5,10-methylene-5,6,7,8-tetrahydrofolate + glycine + H2O = (6S)-5,6,7,8-tetrahydrofolate + L-serine. Its pathway is one-carbon metabolism; tetrahydrofolate interconversion. The protein operates within amino-acid biosynthesis; glycine biosynthesis; glycine from L-serine: step 1/1. Its function is as follows. Catalyzes the reversible interconversion of serine and glycine with tetrahydrofolate (THF) serving as the one-carbon carrier. This reaction serves as the major source of one-carbon groups required for the biosynthesis of purines, thymidylate, methionine, and other important biomolecules. Also exhibits THF-independent aldolase activity toward beta-hydroxyamino acids, producing glycine and aldehydes, via a retro-aldol mechanism. This Mycobacterium tuberculosis (strain CDC 1551 / Oshkosh) protein is Serine hydroxymethyltransferase 2.